Reading from the N-terminus, the 97-residue chain is C-C motif chemokine 8 (97 aa).

Positions 1–23 are cleaved as a signal peptide; it reads MKIYAVLLCLLLIAVPVSPEKLT. Intrachain disulfides connect cysteine 32–cysteine 57 and cysteine 33–cysteine 73.

It belongs to the intercrine beta (chemokine CC) family. Monomer or homodimer; in equilibrium.

The protein localises to the secreted. Functionally, chemotactic factor that attracts monocytes. This protein can bind heparin. This chain is C-C motif chemokine 8 (Ccl8), found in Mus musculus (Mouse).